The following is a 598-amino-acid chain: uncharacterized protein (598 aa).

A compositionally biased stretch (basic and acidic residues) spans 1–23 (MSHEGSRQARDRGVTRSKAEKAR). Disordered regions lie at residues 1–32 (MSHEGSRQARDRGVTRSKAEKARPPTQPVPQV), 151–190 (FHNEEPGNPDQFLLGSSWDKESQKPTQPSEPSAEPKVTPR), and 222–241 (PSKESLRSTAEGERVYSPQS). Residues 225–235 (ESLRSTAEGER) are compositionally biased toward basic and acidic residues. A phosphoserine mark is found at serine 238 and serine 242. 2 disordered regions span residues 366–396 (RRSQAGTATSACESQALSSRAPSKPHVSSPR) and 551–571 (AEEGTPQAPEQQPIQTGVSKP). Composition is skewed to polar residues over residues 369–386 (QAGTATSACESQALSSRA) and 558–569 (APEQQPIQTGVS).

This is an uncharacterized protein from Mus musculus (Mouse).